Here is a 221-residue protein sequence, read N- to C-terminus: GTP cyclohydrolase III (221 aa).

This sequence belongs to the archaeal-type GTP cyclohydrolase family.

The catalysed reaction is GTP + 3 H2O = 2-amino-5-formylamino-6-(5-phospho-D-ribosylamino)pyrimidin-4(3H)-one + 2 phosphate + 2 H(+). Functionally, catalyzes the formation of 2-amino-5-formylamino-6-ribofuranosylamino-4(3H)-pyrimidinone ribonucleotide monophosphate and inorganic phosphate from GTP. Also has an independent pyrophosphate phosphohydrolase activity. The chain is GTP cyclohydrolase III from Pyrobaculum arsenaticum (strain DSM 13514 / JCM 11321 / PZ6).